The sequence spans 418 residues: MIFDKDDFKAYDADLWNAIAKEEERQQNNIELIASENVVSKAVMAAQGSILTNKYAEGYPGRRYYGGTDVVDVVETLAIERAKEIFGAKFANVQPHSGSQANCAAYMSLIEPGDTVMGMDLASGGHLTHGAPVSFSGQTYNFVSYSVDPETELLDFDAILKQAQEVKPKLIVAGASAYSQIIDFSKFREIADAVGAKLMVDMAHIAGLVAAGLHPSPVPYAHITTTTTHKTLRGPRGGLILTNDEELAKKINSAIFPGIQGGPLEHVVAAKAVSFKEVLDPAFKEYAANVIKNSKAMADVFLQDPDFRIISGGTENHLFLVDVTKVVENGKVAQNLLDEVNITLNKNSIPYETLSPFKTSGIRIGAAAITARGFGEEESRKVAELIIKTLKNSENEAVLEEVRSAVKELTDAFPLYED.

(6S)-5,6,7,8-tetrahydrofolate-binding positions include Leu121 and 125-127 (GHL). N6-(pyridoxal phosphate)lysine is present on Lys230. Residues Glu246 and 355 to 357 (SPF) contribute to the (6S)-5,6,7,8-tetrahydrofolate site.

The protein belongs to the SHMT family. In terms of assembly, homodimer. Pyridoxal 5'-phosphate is required as a cofactor.

It is found in the cytoplasm. The catalysed reaction is (6R)-5,10-methylene-5,6,7,8-tetrahydrofolate + glycine + H2O = (6S)-5,6,7,8-tetrahydrofolate + L-serine. The protein operates within one-carbon metabolism; tetrahydrofolate interconversion. It functions in the pathway amino-acid biosynthesis; glycine biosynthesis; glycine from L-serine: step 1/1. In terms of biological role, catalyzes the reversible interconversion of serine and glycine with tetrahydrofolate (THF) serving as the one-carbon carrier. This reaction serves as the major source of one-carbon groups required for the biosynthesis of purines, thymidylate, methionine, and other important biomolecules. Also exhibits THF-independent aldolase activity toward beta-hydroxyamino acids, producing glycine and aldehydes, via a retro-aldol mechanism. In Streptococcus pneumoniae (strain Taiwan19F-14), this protein is Serine hydroxymethyltransferase.